The sequence spans 62 residues: Large ribosomal subunit protein bL28 (62 aa).

The interval 1 to 24 (MGKQCFVTGRKASTGNNRSHALNS) is disordered. The span at 11 to 24 (KASTGNNRSHALNS) shows a compositional bias: polar residues.

It belongs to the bacterial ribosomal protein bL28 family.

The protein is Large ribosomal subunit protein bL28 of Staphylococcus saprophyticus subsp. saprophyticus (strain ATCC 15305 / DSM 20229 / NCIMB 8711 / NCTC 7292 / S-41).